The primary structure comprises 392 residues: Acyl-CoA dehydrogenase IpdE1 (392 aa).

Residues 126–129 (QGYS) and S171 each bind FAD. Catalysis depends on E254, which acts as the Proton acceptor. Residue 371–373 (SNE) coordinates FAD.

Belongs to the acyl-CoA dehydrogenase family. In terms of assembly, heterotetramer composed of 2 IpdE1 subunits and 2 IpdE2 subunits. FAD serves as cofactor.

The catalysed reaction is 3-[(3aS,4S,5R,7aS)-5-hydroxy-7a-methyl-1-oxo-octahydro-1H-inden-4-yl]propanoyl-CoA + A = (2E)-3-[(3aS,4S,5R,7aS)-5-hydroxy-7a-methyl-1-oxo-octahydro-1H-inden-4-yl]prop-2-enoyl-CoA + AH2. The protein operates within steroid metabolism; cholesterol degradation. Its function is as follows. Involved in cholesterol degradation. Catalyzes the dehydrogenation of 5OH-HIP-CoA to 5OH-HIPE-CoA. The polypeptide is Acyl-CoA dehydrogenase IpdE1 (Mycolicibacterium smegmatis (strain ATCC 700084 / mc(2)155) (Mycobacterium smegmatis)).